The primary structure comprises 571 residues: Potassium-transporting ATPase potassium-binding subunit (571 aa).

10 helical membrane-spanning segments follow: residues 7–27 (LQFA…GGYL), 66–86 (TYAL…YGIA), 137–157 (GLAV…AALI), 188–208 (FVVA…GFIV), 255–275 (IGNF…CFAF), 286–306 (WAVL…AMSF), 390–410 (VGLN…GLMV), 430–450 (TLYI…SVLI), 497–517 (IGVA…AIAG), and 538–558 (LFVG…FFPA).

Belongs to the KdpA family. As to quaternary structure, the system is composed of three essential subunits: KdpA, KdpB and KdpC.

The protein localises to the cell membrane. Its function is as follows. Part of the high-affinity ATP-driven potassium transport (or Kdp) system, which catalyzes the hydrolysis of ATP coupled with the electrogenic transport of potassium into the cytoplasm. This subunit binds the extracellular potassium ions and delivers the ions to the membrane domain of KdpB through an intramembrane tunnel. The sequence is that of Potassium-transporting ATPase potassium-binding subunit from Mycobacterium bovis (strain ATCC BAA-935 / AF2122/97).